A 448-amino-acid polypeptide reads, in one-letter code: N-succinylarginine dihydrolase (448 aa).

Residues 19-28 (AGLSSGNIAS), Asn-110, and 137-138 (HR) contribute to the substrate site. Glu-174 is a catalytic residue. Arg-216 contacts substrate. Residue His-252 is part of the active site. Substrate contacts are provided by Asp-254 and Asn-366. The active-site Nucleophile is the Cys-372.

This sequence belongs to the succinylarginine dihydrolase family. As to quaternary structure, homodimer.

It carries out the reaction N(2)-succinyl-L-arginine + 2 H2O + 2 H(+) = N(2)-succinyl-L-ornithine + 2 NH4(+) + CO2. Its pathway is amino-acid degradation; L-arginine degradation via AST pathway; L-glutamate and succinate from L-arginine: step 2/5. Its function is as follows. Catalyzes the hydrolysis of N(2)-succinylarginine into N(2)-succinylornithine, ammonia and CO(2). The chain is N-succinylarginine dihydrolase from Legionella pneumophila (strain Lens).